The sequence spans 132 residues: MGLIVYYSSATGNTEYFVSQLGQRLFKIDKKKPSVLVDEPYVLVVPTYADGEGRMAVPKVVIRFLNECENRKLIRGVIGGGNRNFGCYYNLASKIIAEKCFVPCLYRFELRGTNEDVICVKKGLERFWKQLV.

Belongs to the NrdI family.

Its function is as follows. Probably involved in ribonucleotide reductase function. This chain is Protein NrdI, found in Bartonella quintana (strain Toulouse) (Rochalimaea quintana).